The following is a 277-amino-acid chain: MAIYAIGDIQGCFEPFQQLLRLIDFNPGKDTLWLTGDLVNRGPQSLEVLRWVFQHQDQVEMVLGNHDLHLLAVSEGFGKIHRDDTIDDVLNAADGKVLLDWLRCQPMMLEGHGYAMVHAGLLPEWTISKALRLAEEVEFGLSGTRYREFLGRLYGNKPTRWTDDLKGVDRLRLIVNVMTRMRFLTRDGELDLSYKGELEGAPANLVPWFEAPNRRHGGTPIVCGHWSALGVHLDEDILAIDSGCLWGGSLSALRLDDKQLFSLPCQAYREIALATGR.

It belongs to the Ap4A hydrolase family.

The catalysed reaction is P(1),P(4)-bis(5'-adenosyl) tetraphosphate + H2O = 2 ADP + 2 H(+). Functionally, hydrolyzes diadenosine 5',5'''-P1,P4-tetraphosphate to yield ADP. The protein is Bis(5'-nucleosyl)-tetraphosphatase, symmetrical of Chromobacterium violaceum (strain ATCC 12472 / DSM 30191 / JCM 1249 / CCUG 213 / NBRC 12614 / NCIMB 9131 / NCTC 9757 / MK).